Reading from the N-terminus, the 128-residue chain is CD59 glycoprotein (128 aa).

The N-terminal stretch at 1-25 is a signal peptide; it reads MGIQGGSVLFGLLLVLAVFCHSGNS. Residues 26-108 enclose the UPAR/Ly6 domain; sequence LQCYSCPYPT…ALKNGGTTLS (83 aa). 5 cysteine pairs are disulfide-bonded: Cys-28/Cys-51, Cys-31/Cys-38, Cys-44/Cys-64, Cys-70/Cys-88, and Cys-89/Cys-94. Asn-43 is a glycosylation site (N-linked (GlcNAc...) asparagine). Asn-102 carries the GPI-anchor amidated asparagine lipid modification. The propeptide at 103-128 is removed in mature form; sequence GGTTLSKKTVLLLVIPFLVAAWSLHP.

In terms of assembly, interacts with T-cell surface antigen CD2. N- and O-glycosylated.

The protein localises to the cell membrane. Its subcellular location is the secreted. In terms of biological role, potent inhibitor of the complement membrane attack complex (MAC) action, which protects self-cells from damage during complement activation. Acts by binding to the beta-haipins of C8 (C8A and C8B) components of the assembling MAC, forming an intermolecular beta-sheet that prevents incorporation of the multiple copies of C9 required for complete formation of the osmolytic pore. The sequence is that of CD59 glycoprotein from Aotus trivirgatus (Three-striped night monkey).